Here is a 191-residue protein sequence, read N- to C-terminus: Phospholipase A2-delta (191 aa).

A signal peptide spans 1–25 (MIRGGALTHVALGLTVFLLLAVVHS). 6 disulfides stabilise this stretch: Cys-29–Cys-56, Cys-33–Cys-62, Cys-38–Cys-115, Cys-49–Cys-69, Cys-68–Cys-93, and Cys-75–Cys-86. Residues Tyr-48, Gly-50, and Tyr-53 each coordinate Ca(2+). Residue His-72 is part of the active site. Asp-73 serves as a coordination point for Ca(2+). Residues 161–191 (KADTKDGLGTNQGPQTKDGSKVSVPMNPSPS) are disordered.

This sequence belongs to the phospholipase A2 family. Requires Ca(2+) as cofactor. Specifically expressed in flowers but at a low level. Detected specifically in the pollen.

Its subcellular location is the secreted. The protein resides in the endoplasmic reticulum. It carries out the reaction a 1,2-diacyl-sn-glycero-3-phosphocholine + H2O = a 1-acyl-sn-glycero-3-phosphocholine + a fatty acid + H(+). Functionally, PA2 catalyzes the calcium-dependent hydrolysis of the 2-acyl groups in 3-sn-phosphoglycerides. Releases lysophospholipids (LPLs) and free fatty acids (FFAs) from membrane phospholipids in response to hormones and other external stimuli. Plays a role in pollen development and germination and tube growth. This chain is Phospholipase A2-delta (PLA2-DELTA), found in Arabidopsis thaliana (Mouse-ear cress).